The primary structure comprises 88 residues: Exodeoxyribonuclease 7 small subunit (88 aa).

Residues 69 to 88 are disordered; sequence ALAEEADPEDGASGADGGGA.

It belongs to the XseB family. Heterooligomer composed of large and small subunits.

The protein resides in the cytoplasm. The enzyme catalyses Exonucleolytic cleavage in either 5'- to 3'- or 3'- to 5'-direction to yield nucleoside 5'-phosphates.. Its function is as follows. Bidirectionally degrades single-stranded DNA into large acid-insoluble oligonucleotides, which are then degraded further into small acid-soluble oligonucleotides. In Streptomyces coelicolor (strain ATCC BAA-471 / A3(2) / M145), this protein is Exodeoxyribonuclease 7 small subunit.